Reading from the N-terminus, the 299-residue chain is Protein FAM228A (299 aa).

The disordered stretch occupies residues 135-201 (AKGTSYQHGR…GRNRYKGASS (67 aa)). Basic and acidic residues predominate over residues 146–159 (KTHDTQKEAKETEK). Phosphoserine is present on Ser-264.

Belongs to the FAM228 family.

The chain is Protein FAM228A (Fam228a) from Mus musculus (Mouse).